Reading from the N-terminus, the 151-residue chain is Deoxyuridine 5'-triphosphate nucleotidohydrolase (151 aa).

Substrate-binding positions include 70–72 (RSG), asparagine 83, 87–89 (LID), and methionine 97.

This sequence belongs to the dUTPase family. Mg(2+) serves as cofactor.

It carries out the reaction dUTP + H2O = dUMP + diphosphate + H(+). It functions in the pathway pyrimidine metabolism; dUMP biosynthesis; dUMP from dCTP (dUTP route): step 2/2. In terms of biological role, this enzyme is involved in nucleotide metabolism: it produces dUMP, the immediate precursor of thymidine nucleotides and it decreases the intracellular concentration of dUTP so that uracil cannot be incorporated into DNA. The polypeptide is Deoxyuridine 5'-triphosphate nucleotidohydrolase (Pseudomonas syringae pv. syringae (strain B728a)).